The chain runs to 466 residues: Putative outer membrane protein NMB0088 (466 aa).

An N-terminal signal peptide occupies residues 1 to 24; it reads MTPSALKKTVLLLGTAFAAASVHA.

Belongs to the OmpP1/FadL family.

The protein localises to the cell outer membrane. This is Putative outer membrane protein NMB0088 from Neisseria meningitidis serogroup B (strain ATCC BAA-335 / MC58).